A 466-amino-acid chain; its full sequence is Bifunctional protein GlmU (466 aa).

The segment at 1-236 (MEVMPQPLTI…PAEALGINDR (236 aa)) is pyrophosphorylase. UDP-N-acetyl-alpha-D-glucosamine-binding positions include 13 to 16 (LAAG), lysine 27, glutamine 79, 84 to 85 (GT), 107 to 109 (YGD), glycine 146, glutamate 161, asparagine 176, and asparagine 234. Aspartate 109 contributes to the Mg(2+) binding site. Asparagine 234 lines the Mg(2+) pocket. Positions 237-257 (AQLAEVDRIFRDRKRRAVMAA) are linker. Residues 258 to 466 (GVTLIQPETI…AKKRRKLAKT (209 aa)) are N-acetyltransferase. The UDP-N-acetyl-alpha-D-glucosamine site is built by arginine 340 and lysine 358. Histidine 370 (proton acceptor) is an active-site residue. UDP-N-acetyl-alpha-D-glucosamine contacts are provided by tyrosine 373 and asparagine 384. Residues alanine 387, 393-394 (NY), serine 412, alanine 430, and arginine 447 contribute to the acetyl-CoA site.

The protein in the N-terminal section; belongs to the N-acetylglucosamine-1-phosphate uridyltransferase family. It in the C-terminal section; belongs to the transferase hexapeptide repeat family. As to quaternary structure, homotrimer. It depends on Mg(2+) as a cofactor.

It is found in the cytoplasm. The catalysed reaction is alpha-D-glucosamine 1-phosphate + acetyl-CoA = N-acetyl-alpha-D-glucosamine 1-phosphate + CoA + H(+). The enzyme catalyses N-acetyl-alpha-D-glucosamine 1-phosphate + UTP + H(+) = UDP-N-acetyl-alpha-D-glucosamine + diphosphate. The protein operates within nucleotide-sugar biosynthesis; UDP-N-acetyl-alpha-D-glucosamine biosynthesis; N-acetyl-alpha-D-glucosamine 1-phosphate from alpha-D-glucosamine 6-phosphate (route II): step 2/2. Its pathway is nucleotide-sugar biosynthesis; UDP-N-acetyl-alpha-D-glucosamine biosynthesis; UDP-N-acetyl-alpha-D-glucosamine from N-acetyl-alpha-D-glucosamine 1-phosphate: step 1/1. It participates in bacterial outer membrane biogenesis; LPS lipid A biosynthesis. Catalyzes the last two sequential reactions in the de novo biosynthetic pathway for UDP-N-acetylglucosamine (UDP-GlcNAc). The C-terminal domain catalyzes the transfer of acetyl group from acetyl coenzyme A to glucosamine-1-phosphate (GlcN-1-P) to produce N-acetylglucosamine-1-phosphate (GlcNAc-1-P), which is converted into UDP-GlcNAc by the transfer of uridine 5-monophosphate (from uridine 5-triphosphate), a reaction catalyzed by the N-terminal domain. The polypeptide is Bifunctional protein GlmU (Solibacter usitatus (strain Ellin6076)).